A 598-amino-acid polypeptide reads, in one-letter code: Ecto-NOX disulfide-thiol exchanger 2 (598 aa).

The RRM domain maps to 99–178 (KTVFVGGLPE…GRLHVDFAQA (80 aa)). Coiled-coil stretches lie at residues 264–299 (IQSA…LSGI) and 352–476 (RREE…KQEN).

Belongs to the ENOX family. Cu cation is required as a cofactor. In terms of processing, glycosylated.

Its subcellular location is the cell membrane. The protein resides in the secreted. It localises to the extracellular space. Inhibited by the antitumor sulfonylurea LY181984, the vabilloid capsaicin, and retinoids. In terms of biological role, may be involved in cell growth. Probably acts as a terminal oxidase of plasma electron transport from cytosolic NAD(P)H via hydroquinones to acceptors at the cell surface. Hydroquinone oxidase activity alternates with a protein disulfide-thiol interchange/oxidoreductase activity which may control physical membrane displacements associated with vesicle budding or cell enlargement. The activities oscillate with a period length of 22 minutes and play a role in control of the ultradian cellular biological clock. The polypeptide is Ecto-NOX disulfide-thiol exchanger 2 (Enox2) (Mus musculus (Mouse)).